We begin with the raw amino-acid sequence, 320 residues long: Aspartate carbamoyltransferase catalytic subunit (320 aa).

Carbamoyl phosphate-binding residues include arginine 68 and threonine 69. An L-aspartate-binding site is contributed by lysine 96. 3 residues coordinate carbamoyl phosphate: arginine 118, histidine 148, and glutamine 151. Residues arginine 181 and arginine 236 each contribute to the L-aspartate site. Positions 277 and 278 each coordinate carbamoyl phosphate.

The protein belongs to the aspartate/ornithine carbamoyltransferase superfamily. ATCase family. As to quaternary structure, heterododecamer (2C3:3R2) of six catalytic PyrB chains organized as two trimers (C3), and six regulatory PyrI chains organized as three dimers (R2).

It carries out the reaction carbamoyl phosphate + L-aspartate = N-carbamoyl-L-aspartate + phosphate + H(+). Its pathway is pyrimidine metabolism; UMP biosynthesis via de novo pathway; (S)-dihydroorotate from bicarbonate: step 2/3. Catalyzes the condensation of carbamoyl phosphate and aspartate to form carbamoyl aspartate and inorganic phosphate, the committed step in the de novo pyrimidine nucleotide biosynthesis pathway. This Variovorax paradoxus (strain S110) protein is Aspartate carbamoyltransferase catalytic subunit.